The following is a 389-amino-acid chain: MSNDRNAQELLKWGLANSGSTGVASFASQSVEQISADIEAGRRPDLADPNLYNAIMGKSEAQMMAEELSVAIDTSRTLPDRMTALDNFEMLIEQIDNANNMTSMKMWSPIISLLSAPEAEIQTAAAWIIGTAVQNNDKAQMAVLDFHPVAALLDLLHSHVDEVRAKAMYALSGLLKHNPAAMHQFDQLDGWNMLNMALVDPNLGLRRKTAFLINALLLQDPNSLDSQPASTSTATAIAPVSFTPPTPTAPPAPLERGPETLRTSIPHPNVARALVQSNIINTLISSLLPAHTLPDTLSPPPTGANGDSDARLDLDFAEKSAAAILTFTTKLPPSPSHPLDPTTISLFKALLVQLQAKPLDSSDPASTRWAELGIHAHDFDQFKHKIHAL.

ARM repeat units follow at residues 95–134, 137–176, and 179–218; these read IDNA…TAVQ, DKAQ…GLLK, and PAAM…ALLL. Residues 223–255 are disordered; it reads SLDSQPASTSTATAIAPVSFTPPTPTAPPAPLE. Residues 242–253 show a composition bias toward pro residues; sequence FTPPTPTAPPAP. The ARM 4 repeat unit spans residues 268-310; that stretch reads PNVARALVQSNIINTLISSLLPAHTLPDTLSPPPTGANGDSDA.

Belongs to the FES1 family.

The protein localises to the cytoplasm. In terms of biological role, functions as a nucleotide exchange factor (NEF) for Hsp70 chaperones which accelerates the release of ADP. Required for fully efficient Hsp70-mediated folding of proteins. This Mycosarcoma maydis (Corn smut fungus) protein is Hsp70 nucleotide exchange factor FES1 (FES1).